The primary structure comprises 843 residues: Probable inorganic carbon transporter subunit DabA 2 (843 aa).

Zn(2+)-binding residues include Cys352, Asp354, His536, and Cys551.

Belongs to the inorganic carbon transporter (TC 9.A.2) DabA family. In terms of assembly, forms a complex with DabB. It depends on Zn(2+) as a cofactor.

It localises to the cell inner membrane. Part of an energy-coupled inorganic carbon pump. This chain is Probable inorganic carbon transporter subunit DabA 2, found in Bradyrhizobium sp. (strain BTAi1 / ATCC BAA-1182).